A 138-amino-acid chain; its full sequence is Transcription antitermination protein NusB (138 aa).

This sequence belongs to the NusB family.

Its function is as follows. Involved in transcription antitermination. Required for transcription of ribosomal RNA (rRNA) genes. Binds specifically to the boxA antiterminator sequence of the ribosomal RNA (rrn) operons. The protein is Transcription antitermination protein NusB of Yersinia enterocolitica serotype O:8 / biotype 1B (strain NCTC 13174 / 8081).